Reading from the N-terminus, the 225-residue chain is Ribonuclease 3 (225 aa).

The RNase III domain occupies Ile4 to Gly127. A Mg(2+)-binding site is contributed by Glu40. Residue Asp44 is part of the active site. Positions 113 and 116 each coordinate Mg(2+). Glu116 is a catalytic residue. The region spanning Asp154–Ser223 is the DRBM domain.

Belongs to the ribonuclease III family. In terms of assembly, homodimer. The cofactor is Mg(2+).

It localises to the cytoplasm. It carries out the reaction Endonucleolytic cleavage to 5'-phosphomonoester.. Functionally, digests double-stranded RNA. Involved in the processing of primary rRNA transcript to yield the immediate precursors to the large and small rRNAs (23S and 16S). Processes some mRNAs, and tRNAs when they are encoded in the rRNA operon. Processes pre-crRNA and tracrRNA of type II CRISPR loci if present in the organism. The polypeptide is Ribonuclease 3 (Campylobacter jejuni subsp. doylei (strain ATCC BAA-1458 / RM4099 / 269.97)).